A 68-amino-acid chain; its full sequence is Protein SlyX homolog (68 aa).

This sequence belongs to the SlyX family.

This Pseudomonas syringae pv. syringae (strain B728a) protein is Protein SlyX homolog.